The sequence spans 287 residues: (S)-phenoxypropionate/alpha-ketoglutarate-dioxygenase (287 aa).

Fe cation-binding residues include His102 and Asp104. 2 residues coordinate 2-oxoglutarate: Thr129 and Trp242. His257 is a Fe cation binding site. 2-oxoglutarate is bound at residue Arg268.

It belongs to the TfdA dioxygenase family. In terms of assembly, monomer. Requires Fe cation as cofactor. L-ascorbate is required as a cofactor.

It carries out the reaction (S)-2-(4-chloro-2-methylphenoxy)propanoate + 2-oxoglutarate + O2 = 2-methyl-4-chlorophenol + pyruvate + succinate + CO2. It catalyses the reaction (S)-(2,4-dichlorophenoxy)propanoate + 2-oxoglutarate + O2 = 2,4-dichlorophenol + pyruvate + succinate + CO2. The protein operates within xenobiotic degradation; 2-(2,4-dichlorophenoxy)propanoate degradation. In terms of biological role, involved in the degradation of the phenoxypropionate herbicides. Catalyzes the enantiospecific cleavage of the ether bond in the herbicid S-dichlorprop ((S)-2-(2,4-dichlorophenoxy)propionate)(S-2,4-DP) and S-mecoprop ((S)-2-(4-chloro-2-methylphenoxy)propionate)(S-2,4-MCPP). It can also accept (RS)-2-(4-chloro-2-methylphenoxy)propionate ((RS)-2,4-MCPP) and phenoxyacetate derivatives such as 2,4-dichlorophenoxyacetate (2,4-D), however it can only accept 2-oxoglutarate as oxygen acceptor. The chain is (S)-phenoxypropionate/alpha-ketoglutarate-dioxygenase from Sphingobium herbicidovorans (strain ATCC 700291 / DSM 11019 / CCUG 56400 / KCTC 2939 / LMG 18315 / NBRC 16415 / MH) (Sphingomonas herbicidovorans).